Reading from the N-terminus, the 327-residue chain is Aspartate carbamoyltransferase catalytic subunit (327 aa).

Positions 54 and 55 each coordinate carbamoyl phosphate. Lys82 serves as a coordination point for L-aspartate. Carbamoyl phosphate-binding residues include Arg104, His134, and Gln137. The L-aspartate site is built by Arg177 and Arg232. The carbamoyl phosphate site is built by Gly280 and Pro281.

The protein belongs to the aspartate/ornithine carbamoyltransferase superfamily. ATCase family. In terms of assembly, heterododecamer (2C3:3R2) of six catalytic PyrB chains organized as two trimers (C3), and six regulatory PyrI chains organized as three dimers (R2).

It catalyses the reaction carbamoyl phosphate + L-aspartate = N-carbamoyl-L-aspartate + phosphate + H(+). It functions in the pathway pyrimidine metabolism; UMP biosynthesis via de novo pathway; (S)-dihydroorotate from bicarbonate: step 2/3. In terms of biological role, catalyzes the condensation of carbamoyl phosphate and aspartate to form carbamoyl aspartate and inorganic phosphate, the committed step in the de novo pyrimidine nucleotide biosynthesis pathway. This chain is Aspartate carbamoyltransferase catalytic subunit, found in Micrococcus luteus (strain ATCC 4698 / DSM 20030 / JCM 1464 / CCM 169 / CCUG 5858 / IAM 1056 / NBRC 3333 / NCIMB 9278 / NCTC 2665 / VKM Ac-2230) (Micrococcus lysodeikticus).